The primary structure comprises 205 residues: MFIVLEGIDGAGKSTQAKLLAEWFENRGYEVVLTKEPTDTPFGKLIRRLVLTGGKEGIIDGAKISHEAEALLFAADRAEHVDKLIKPSLEAGKVVISDRYFYSSLAYQWARGLDLEWLIDLNRFAVKPDIVFLLDLPVKESMNRIRSRKVKSEFDKIFELQRKVRENYLKLAEMFPEMKIINAMEDVETVHNQIIALIETLLGEE.

7–14 contacts ATP; it reads GIDGAGKS.

The protein belongs to the thymidylate kinase family.

It catalyses the reaction dTMP + ATP = dTDP + ADP. In Thermococcus kodakarensis (strain ATCC BAA-918 / JCM 12380 / KOD1) (Pyrococcus kodakaraensis (strain KOD1)), this protein is Probable thymidylate kinase.